Here is a 443-residue protein sequence, read N- to C-terminus: tRNA modification GTPase MnmE (443 aa).

Positions 23, 81, and 119 each coordinate (6S)-5-formyl-5,6,7,8-tetrahydrofolate. The TrmE-type G domain maps to 214 to 369 (GMRVAILGKP…LLSALKERAI (156 aa)). GTP is bound by residues 224–229 (NVGKST), 243–249 (SEYPGTT), and 268–271 (DTAG). Residues serine 228 and threonine 249 each contribute to the Mg(2+) site. A (6S)-5-formyl-5,6,7,8-tetrahydrofolate-binding site is contributed by lysine 443.

The protein belongs to the TRAFAC class TrmE-Era-EngA-EngB-Septin-like GTPase superfamily. TrmE GTPase family. Homodimer. Heterotetramer of two MnmE and two MnmG subunits. K(+) serves as cofactor.

It localises to the cytoplasm. Its function is as follows. Exhibits a very high intrinsic GTPase hydrolysis rate. Involved in the addition of a carboxymethylaminomethyl (cmnm) group at the wobble position (U34) of certain tRNAs, forming tRNA-cmnm(5)s(2)U34. The sequence is that of tRNA modification GTPase MnmE from Anaplasma marginale (strain St. Maries).